The chain runs to 1072 residues: Dyslexia-associated protein KIAA0319 (1072 aa).

Positions 1-20 are cleaved as a signal peptide; it reads MAPPTGVLSSLLLLVTIAGC. Positions 21-99 constitute an MANSC domain; the sequence is ARKQCSEGRT…PKKMGPIRSY (79 aa). The Extracellular segment spans residues 21 to 955; it reads ARKQCSEGRT…WDGESNCEWS (935 aa). Disordered regions lie at residues 168-277 and 295-327; these read LQPS…SLPP and VTPGSTEHSIPTPPTSAAPSESTPSELPISPTT. Residues asparagine 196, asparagine 219, and asparagine 262 are each glycosylated (N-linked (GlcNAc...) asparagine). Residues 254–265 show a composition bias toward polar residues; that stretch reads SQLQEQSSNSSG. Residues 311–320 are compositionally biased toward low complexity; sequence AAPSESTPSE. PKD domains are found at residues 341-427, 435-524, 530-620, 621-714, and 720-811; these read DNLI…VKPA, VAVV…VNNA, VANA…VQPE, NNRP…VKKE, and RARA…VQPD. Asparagine 394, asparagine 421, asparagine 498, asparagine 513, asparagine 536, and asparagine 551 each carry an N-linked (GlcNAc...) asparagine glycan. N-linked (GlcNAc...) asparagine glycosylation is present at asparagine 733. The chain crosses the membrane as a helical span at residues 956 to 976; that stretch reads IFYVTVLAFTLIVLTGGFTWL. At 977–1072 the chain is on the cytoplasmic side; the sequence is CICCCKRQKR…ASFSYCSKDR (96 aa). Positions 995–998 match the Endocytosis signal motif; it reads YTIL. Residues 1045–1072 form a disordered region; sequence KMERGNPKVSMNGSIRNGASFSYCSKDR. Polar residues predominate over residues 1053–1072; it reads VSMNGSIRNGASFSYCSKDR.

In terms of assembly, homodimer. Interacts with AP2M1; required for clathrin-mediated endocytosis. N-glycosylated. Post-translationally, O-glycosylated. In terms of processing, shedding of the extracellular domain and intramembrane cleavage produce several proteolytic products. The intramembrane cleavage releases a soluble cytoplasmic polypeptide that translocates to the nucleolus. As to expression, detected in adult brain cortex and fetal frontal lobe (at protein level). Highly expressed in brain cortex, putamen, amygdala, hippocampus and cerebellum.

The protein localises to the cell membrane. It is found in the early endosome membrane. In terms of biological role, involved in neuronal migration during development of the cerebral neocortex. May function in a cell autonomous and a non-cell autonomous manner and play a role in appropriate adhesion between migrating neurons and radial glial fibers. May also regulate growth and differentiation of dendrites. This is Dyslexia-associated protein KIAA0319 (KIAA0319) from Homo sapiens (Human).